Here is a 612-residue protein sequence, read N- to C-terminus: Elongation factor 4 (612 aa).

The region spanning 11–193 (KHIRNFSIVA…RIVTDISAPT (183 aa)) is the tr-type G domain. GTP-binding positions include 23-28 (DHGKST) and 140-143 (NKID).

This sequence belongs to the TRAFAC class translation factor GTPase superfamily. Classic translation factor GTPase family. LepA subfamily.

The protein resides in the cell membrane. The enzyme catalyses GTP + H2O = GDP + phosphate + H(+). Required for accurate and efficient protein synthesis under certain stress conditions. May act as a fidelity factor of the translation reaction, by catalyzing a one-codon backward translocation of tRNAs on improperly translocated ribosomes. Back-translocation proceeds from a post-translocation (POST) complex to a pre-translocation (PRE) complex, thus giving elongation factor G a second chance to translocate the tRNAs correctly. Binds to ribosomes in a GTP-dependent manner. This chain is Elongation factor 4, found in Lactobacillus delbrueckii subsp. bulgaricus (strain ATCC 11842 / DSM 20081 / BCRC 10696 / JCM 1002 / NBRC 13953 / NCIMB 11778 / NCTC 12712 / WDCM 00102 / Lb 14).